The following is a 134-amino-acid chain: UPF0412 protein YaaI (134 aa).

A signal peptide spans 1 to 23; it reads MRSVLTISAGLLFGLALSSVAHA.

Belongs to the UPF0412 family.

In Salmonella agona (strain SL483), this protein is UPF0412 protein YaaI.